The primary structure comprises 44 residues: DNA-directed RNA polymerase subunit Rpo12 (44 aa).

Residues Cys8, Cys22, and Cys25 each contribute to the Zn(2+) site.

Belongs to the archaeal Rpo12/eukaryotic RPC10 RNA polymerase subunit family. As to quaternary structure, part of the RNA polymerase complex. The cofactor is Zn(2+).

It is found in the cytoplasm. It carries out the reaction RNA(n) + a ribonucleoside 5'-triphosphate = RNA(n+1) + diphosphate. In terms of biological role, DNA-dependent RNA polymerase (RNAP) catalyzes the transcription of DNA into RNA using the four ribonucleoside triphosphates as substrates. This is DNA-directed RNA polymerase subunit Rpo12 from Natronomonas pharaonis (strain ATCC 35678 / DSM 2160 / CIP 103997 / JCM 8858 / NBRC 14720 / NCIMB 2260 / Gabara) (Halobacterium pharaonis).